Reading from the N-terminus, the 302-residue chain is Glycine--tRNA ligase alpha subunit (302 aa).

The protein belongs to the class-II aminoacyl-tRNA synthetase family. In terms of assembly, tetramer of two alpha and two beta subunits.

It is found in the cytoplasm. The catalysed reaction is tRNA(Gly) + glycine + ATP = glycyl-tRNA(Gly) + AMP + diphosphate. The chain is Glycine--tRNA ligase alpha subunit (glyQ) from Haemophilus influenzae (strain ATCC 51907 / DSM 11121 / KW20 / Rd).